Here is a 285-residue protein sequence, read N- to C-terminus: Sulfoquinovosyl glycerol transport system permease protein SmoH (285 aa).

6 helical membrane passes run 21-41 (FIAA…ILFT), 83-103 (FMVA…AAYA), 115-135 (ILSL…VPLF), 150-170 (LILP…VSFF), 195-215 (VVVP…FVNA), and 250-270 (PVIS…IVIF). The 192-residue stretch at 79–270 (LFNSFMVALL…VPVAILIVIF (192 aa)) folds into the ABC transmembrane type-1 domain.

This sequence belongs to the binding-protein-dependent transport system permease family. As to quaternary structure, the complex is probably composed of two ATP-binding proteins (SmoE), two transmembrane proteins (SmoG and SmoH) and a solute-binding protein (SmoF).

The protein resides in the cell inner membrane. In terms of biological role, part of the ABC transporter complex SmoEFGH involved in sulfoquinovosyl glycerol (SQGro) uptake. Responsible for the translocation of the substrate across the membrane. This Agrobacterium fabrum (strain C58 / ATCC 33970) (Agrobacterium tumefaciens (strain C58)) protein is Sulfoquinovosyl glycerol transport system permease protein SmoH.